A 450-amino-acid chain; its full sequence is Oxygen-independent coproporphyrinogen III oxidase (450 aa).

Positions 42 to 276 constitute a Radical SAM core domain; it reads LPAGASASLY…CAIANALKEA (235 aa). Position 51 (Tyr51) interacts with S-adenosyl-L-methionine. [4Fe-4S] cluster contacts are provided by Cys57 and Cys61. Tyr63 serves as a coordination point for S-adenosyl-L-methionine. Position 64 (Cys64) interacts with [4Fe-4S] cluster. S-adenosyl-L-methionine-binding positions include Gly108, 109–110, Glu141, Gln168, Arg180, Asp205, Ala239, and Ile325; that span reads GT.

Belongs to the anaerobic coproporphyrinogen-III oxidase family. In terms of assembly, monomer. It depends on [4Fe-4S] cluster as a cofactor.

Its subcellular location is the cytoplasm. The enzyme catalyses coproporphyrinogen III + 2 S-adenosyl-L-methionine = protoporphyrinogen IX + 2 5'-deoxyadenosine + 2 L-methionine + 2 CO2. It participates in porphyrin-containing compound metabolism; protoporphyrin-IX biosynthesis; protoporphyrinogen-IX from coproporphyrinogen-III (AdoMet route): step 1/1. Involved in the heme biosynthesis. Catalyzes the anaerobic oxidative decarboxylation of propionate groups of rings A and B of coproporphyrinogen III to yield the vinyl groups in protoporphyrinogen IX. The chain is Oxygen-independent coproporphyrinogen III oxidase (hemN) from Bradyrhizobium diazoefficiens (strain JCM 10833 / BCRC 13528 / IAM 13628 / NBRC 14792 / USDA 110).